Here is a 337-residue protein sequence, read N- to C-terminus: Mitochondrial glutathione transporter SLC25A40 (337 aa).

3 Solcar repeats span residues 14 to 132, 140 to 224, and 234 to 328; these read VTPL…LSTF, NETR…LRRW, and STFM…GKGF. 6 consecutive transmembrane segments (helical) span residues 20–40, 104–124, 146–166, 200–221, 240–260, and 299–319; these read MMAS…LDVV, LWSG…IYFT, IVAG…LELI, WAPT…YENL, FTAG…FDVV, and GLFT…AIMI.

Belongs to the mitochondrial carrier (TC 2.A.29) family. Widely expressed at low level.

It localises to the mitochondrion inner membrane. It catalyses the reaction glutathione(in) = glutathione(out). In terms of biological role, probable mitochondrial transporter required for glutathione import into mitochondria. Glutathione, which plays key roles in oxidative metabolism, is produced exclusively in the cytosol and is imported in many organelles. Mitochondrial glutathione is required for the activity and stability of proteins containing iron-sulfur clusters, as well as erythropoiesis. In Rattus norvegicus (Rat), this protein is Mitochondrial glutathione transporter SLC25A40.